A 332-amino-acid polypeptide reads, in one-letter code: Aquaporin-7-1 (332 aa).

The Cytoplasmic segment spans residues 1-66 (MSGQHQITEQ…RHAIRMPMAE (66 aa)). A helical transmembrane segment spans residues 67-87 (FFGVALLIIFGAGSACQVVLS). Residues 88 to 100 (TNPNVASSDRGSF) lie on the Extracellular side of the membrane. The helical transmembrane segment at 101-121 (LSINLGWAIGIAMGAWVSGGI) threads the bilayer. At 122–144 (SGGHINPAITIAMATYRGFPWRR) the chain is on the cytoplasmic side. The short motif at 127–129 (NPA) is the NPA 1 element. The chain crosses the membrane as a helical span at residues 145–165 (VPSYIFAQVLGGVVGAALVYA). The Extracellular segment spans residues 166 to 199 (NYIHAIDIFEGGRHVRTQATASLFATYALPYMTQ). Residues 200 to 220 (VSCFFSEFLATAVLSMMVLAL) form a helical membrane-spanning segment. Over 221–230 (TDNRNGAPTN) the chain is Cytoplasmic. A helical transmembrane segment spans residues 231–251 (GLLPFALFVLFIGLGASLGME). Residues 252–283 (TAYALNPARDFGPRLFLAMSGYGKALFNYRSQ) are Extracellular-facing. The NPA 2 motif lies at 257-259 (NPA). Residues 284-304 (YWLWAPIIAPVLGAQAGGLLY) form a helical membrane-spanning segment. At 305 to 332 (DTFLYDGDNSPIKWRRASSQECQLAEVV) the chain is on the cytoplasmic side.

The protein belongs to the MIP/aquaporin (TC 1.A.8) family.

The protein resides in the membrane. It carries out the reaction H2O(in) = H2O(out). In terms of biological role, water channel required to facilitate the transport of water across membranes. Does not mediate the transport carbon dioxide across the membrane. The sequence is that of Aquaporin-7-1 from Laccaria bicolor (Bicoloured deceiver).